The primary structure comprises 297 residues: Protease HtpX homolog (297 aa).

A run of 2 helical transmembrane segments spans residues 14–34 (VILL…AGYL) and 39–59 (YQLG…SMIF). Zn(2+) is bound at residue His-143. Glu-144 is an active-site residue. Residue His-147 coordinates Zn(2+). A run of 2 helical transmembrane segments spans residues 158 to 178 (IAVA…RMMW) and 193 to 213 (GFGA…PLAA). A Zn(2+)-binding site is contributed by Glu-225.

This sequence belongs to the peptidase M48B family. It depends on Zn(2+) as a cofactor.

The protein localises to the cell membrane. In Streptococcus equi subsp. zooepidemicus (strain MGCS10565), this protein is Protease HtpX homolog.